The primary structure comprises 194 residues: Probable nicotinate-nucleotide adenylyltransferase (194 aa).

Belongs to the NadD family.

The catalysed reaction is nicotinate beta-D-ribonucleotide + ATP + H(+) = deamido-NAD(+) + diphosphate. Its pathway is cofactor biosynthesis; NAD(+) biosynthesis; deamido-NAD(+) from nicotinate D-ribonucleotide: step 1/1. In terms of biological role, catalyzes the reversible adenylation of nicotinate mononucleotide (NaMN) to nicotinic acid adenine dinucleotide (NaAD). The sequence is that of Probable nicotinate-nucleotide adenylyltransferase from Christiangramia forsetii (strain DSM 17595 / CGMCC 1.15422 / KT0803) (Gramella forsetii).